The chain runs to 422 residues: 5-hydroxytryptamine receptor 1A (422 aa).

At methionine 1 to isoleucine 38 the chain is on the extracellular side. N-linked (GlcNAc...) asparagine glycosylation is found at asparagine 10, asparagine 11, and asparagine 24. Residues threonine 39–alanine 59 form a helical membrane-spanning segment. Residues alanine 60–tyrosine 73 are Cytoplasmic-facing. A helical membrane pass occupies residues leucine 74–valine 98. The Extracellular segment spans residues leucine 99 to valine 107. A helical membrane pass occupies residues threonine 108 to leucine 132. A disulfide bridge links cysteine 109 with cysteine 187. Serotonin contacts are provided by aspartate 116 and cysteine 120. A DRY motif; important for ligand-induced conformation changes motif is present at residues aspartate 133–tyrosine 135. Over aspartate 133–arginine 152 the chain is Cytoplasmic. Residues alanine 153–glycine 174 traverse the membrane as a helical segment. Residues tryptophan 175 to histidine 193 are Extracellular-facing. A helical membrane pass occupies residues glycine 194–glycine 216. Residues arginine 217–threonine 346 lie on the Cytoplasmic side of the membrane. The interval lysine 235 to glycine 261 is disordered. Positions 345, 346, and 352 each coordinate 1D-myo-inositol 4-phosphate. Residues leucine 347–phenylalanine 370 form a helical membrane-spanning segment. Residues cysteine 371–proline 378 are Extracellular-facing. Residues alanine 379 to phenylalanine 403 traverse the membrane as a helical segment. The short motif at asparagine 396–tyrosine 400 is the NPxxY motif; important for ligand-induced conformation changes and signaling element. The 1D-myo-inositol 4-phosphate site is built by phenylalanine 403, asparagine 404, and lysine 405. The Cytoplasmic segment spans residues asparagine 404–arginine 422.

The protein belongs to the G-protein coupled receptor 1 family. 5-hydroxytryptamine receptor subfamily. HTR1A sub-subfamily. Heterodimer; heterodimerizes with GPER1. Interacts with YIF1B. Interacts with GPR39 and GALR1. Detected in hypothalamus, mesencephalon, amygdala, medulla, thalamus, septum and hippocampus.

The protein localises to the cell membrane. It is found in the cell projection. It localises to the dendrite. G-protein coupled receptor activity is regulated by lipids: phosphatidylinositol 4-phosphate increases HTR1A-mediated activity. In terms of biological role, G-protein coupled receptor for 5-hydroxytryptamine (serotonin). Also functions as a receptor for various drugs and psychoactive substances. Ligand binding causes a conformation change that triggers signaling via guanine nucleotide-binding proteins (G proteins) and modulates the activity of downstream effectors, such as adenylate cyclase. HTR1A is coupled to G(i)/G(o) G alpha proteins and mediates inhibitory neurotransmission: signaling inhibits adenylate cyclase activity and activates a phosphatidylinositol-calcium second messenger system that regulates the release of Ca(2+) ions from intracellular stores. Beta-arrestin family members regulate signaling by mediating both receptor desensitization and resensitization processes. This Rattus norvegicus (Rat) protein is 5-hydroxytryptamine receptor 1A.